We begin with the raw amino-acid sequence, 550 residues long: Hydroxylamine reductase (550 aa).

Cysteine 3, cysteine 6, cysteine 18, and cysteine 25 together coordinate [2Fe-2S] cluster. Hybrid [4Fe-2O-2S] cluster-binding residues include histidine 249, glutamate 273, cysteine 317, cysteine 405, cysteine 433, cysteine 458, glutamate 492, and lysine 494. Residue cysteine 405 is modified to Cysteine persulfide.

It belongs to the HCP family. The cofactor is [2Fe-2S] cluster. Requires hybrid [4Fe-2O-2S] cluster as cofactor.

It is found in the cytoplasm. It carries out the reaction A + NH4(+) + H2O = hydroxylamine + AH2 + H(+). In terms of biological role, catalyzes the reduction of hydroxylamine to form NH(3) and H(2)O. The sequence is that of Hydroxylamine reductase from Pectobacterium atrosepticum (strain SCRI 1043 / ATCC BAA-672) (Erwinia carotovora subsp. atroseptica).